Consider the following 561-residue polypeptide: Asparagine synthetase [glutamine-hydrolyzing] (561 aa).

The active-site For GATase activity is Cys2. The 190-residue stretch at 2-191 (CGIWALFGSD…PGHYEVLDLK (190 aa)) folds into the Glutamine amidotransferase type-2 domain. L-glutamine contacts are provided by residues 49 to 53 (RLAVV), 75 to 77 (NGE), and Asp97. In terms of domain architecture, Asparagine synthetase spans 213-536 (HALYDSVEKL…PGRADWLTHY (324 aa)). Residues Leu256, Ile288, and 363 to 364 (SG) contribute to the ATP site. An N6-acetyllysine modification is found at Lys385. Thr545 is subject to Phosphothreonine. Ser557 bears the Phosphoserine mark.

The enzyme catalyses L-aspartate + L-glutamine + ATP + H2O = L-asparagine + L-glutamate + AMP + diphosphate + H(+). It functions in the pathway amino-acid biosynthesis; L-asparagine biosynthesis; L-asparagine from L-aspartate (L-Gln route): step 1/1. This Cricetulus griseus (Chinese hamster) protein is Asparagine synthetase [glutamine-hydrolyzing] (ASNS).